The sequence spans 542 residues: Propane 2-monooxygenase, hydroxylase component large subunit (542 aa).

Residues Glu-97, Glu-127, His-130, Glu-192, Glu-226, and His-229 each contribute to the Fe cation site.

It belongs to the TmoA/XamoA family. As to quaternary structure, the propane 2-monooxygenase multicomponent enzyme system is composed of an electron transfer component and a monooxygenase component interacting with the effector protein MimD. The electron transfer component is composed of a reductase (MimB), and the monooxygenase component is formed by a large subunit (MimA) and a small subunit (MimC). Requires the presence of the chaperonin-like protein MimG to ensure a productive folding, resulting of a soluble MimA, which leads to the active form of MimABCD. The cofactor is Fe(2+).

The enzyme catalyses propane + NADH + O2 + H(+) = propan-2-ol + NAD(+) + H2O. It catalyses the reaction acetone + NADH + O2 + H(+) = hydroxyacetone + NAD(+) + H2O. It carries out the reaction butan-2-one + NADH + O2 + H(+) = 1-hydroxy-2-butanone + NAD(+) + H2O. The catalysed reaction is phenol + NADH + O2 + H(+) = hydroquinone + NAD(+) + H2O. Its function is as follows. Component of the propane 2-monooxygenase multicomponent enzyme system which is involved in the degradation of propane via the O2-dependent hydroxylation of propane. Also involved in the degradation of acetone via the O2-dependent hydroxylation of acetone. Also able to catalyze the oxidation of phenol, methylethylketone (2-butanone), 1-propanol and 2-propanol. In Mycolicibacterium smegmatis (strain ATCC 700084 / mc(2)155) (Mycobacterium smegmatis), this protein is Propane 2-monooxygenase, hydroxylase component large subunit.